The sequence spans 249 residues: uncharacterized protein (249 aa).

Residues 1–43 (MRRGRSRPAGAAPAALLLPLLLLLPLTGCDRLAAAPAEHAAAA) form the signal peptide. A disordered region spans residues 40–59 (AAAAGDPAQDADRGRRLPPV). One can recognise a NodB homology domain in the interval 68 to 243 (PVVFLTYDDG…TIEEQGLRVG (176 aa)).

This is an uncharacterized protein from Streptomyces coelicolor (strain ATCC BAA-471 / A3(2) / M145).